Here is a 330-residue protein sequence, read N- to C-terminus: MRKCARIIYNPTSGKELFKRTLPDVLIKLERAGYETSAYATEREGDATLEAERALKRDYDIIIAAGGDGTLNEVVNGIAEQPNRPKLGIIPMGTVNDFGRALHLPSDIMGAVDVIIDDHTTKVDIGKMNNRYFINLAAGGQLTQVSYETPSRLKSIVGPFAYYIKGFEMLPQMKAVDLRIEYDNQVFQGEALLFLLGLTNSMAGFEKLVPDAKLDDGHFTLIIVEKANLAELGHIMTLASRGEHIKHPKVIYEKAKSINISSFTEMQLNVDGEYGGKLPANFLNLKRHIEVCTPKDIYNEELTEDQQVEDGIIEEKPSNEEIIKNNEISE.

In terms of domain architecture, DAGKc spans 1 to 132 (MRKCARIIYN…VDIGKMNNRY (132 aa)). ATP contacts are provided by residues 10-14 (NPTSG), T41, 67-73 (GDGTLNE), and T94. K213, D216, and H218 together coordinate Mg(2+). E273 serves as the catalytic Proton acceptor.

The protein belongs to the diacylglycerol/lipid kinase family. Homodimer. Requires Mg(2+) as cofactor.

It catalyses the reaction a 1,2-diacyl-sn-glycerol + ATP = a 1,2-diacyl-sn-glycero-3-phosphate + ADP + H(+). Its function is as follows. Catalyzes the phosphorylation of diacylglycerol (DAG) into phosphatidic acid. Is a key enzyme involved in the production of lipoteichoic acid by reintroducing DAG formed from the breakdown of membrane phospholipids into the phosphatidylglycerol biosynthetic pathway. This chain is Diacylglycerol kinase (dagK), found in Staphylococcus haemolyticus (strain JCSC1435).